The chain runs to 160 residues: Cytochrome b6-f complex subunit 4 (160 aa).

Transmembrane regions (helical) follow at residues 36 to 56 (LLYI…GLAV), 95 to 115 (LLGV…PFLE), and 131 to 151 (TVFL…TLPI).

The protein belongs to the cytochrome b family. PetD subfamily. As to quaternary structure, the 4 large subunits of the cytochrome b6-f complex are cytochrome b6, subunit IV (17 kDa polypeptide, petD), cytochrome f and the Rieske protein, while the 4 small subunits are petG, petL, petM and petN. The complex functions as a dimer.

Its subcellular location is the plastid. It localises to the chloroplast thylakoid membrane. In terms of biological role, component of the cytochrome b6-f complex, which mediates electron transfer between photosystem II (PSII) and photosystem I (PSI), cyclic electron flow around PSI, and state transitions. This is Cytochrome b6-f complex subunit 4 from Sorghum bicolor (Sorghum).